The primary structure comprises 69 residues: Protein transport protein Sec61 subunit gamma (69 aa).

The Cytoplasmic portion of the chain corresponds to 1 to 40 (MDILEETAAPLKDFAKNSIRLFKKCTKPDAQEFQKIALAT). Residues 41–61 (LIGFAIMGFIGFFVKLIHIPI) form a helical membrane-spanning segment. The Extracellular portion of the chain corresponds to 62–69 (NNILVGGV).

It belongs to the SecE/SEC61-gamma family. As to quaternary structure, heterotrimeric complex composed of SEC61-alpha, SEC61-beta and SEC61-gamma.

The protein localises to the endoplasmic reticulum membrane. Its function is as follows. Necessary for protein translocation in the endoplasmic reticulum. This chain is Protein transport protein Sec61 subunit gamma (sec61g), found in Dictyostelium discoideum (Social amoeba).